The sequence spans 332 residues: GDP-mannose transporter 2 (332 aa).

The Cytoplasmic segment spans residues 1 to 12 (MSSLKVSQQDKK). Residues 13 to 33 (WVNSGSVAILAYCASSILMTI) traverse the membrane as a helical segment. The Lumenal segment spans residues 34 to 47 (TNKVVMSDRTFNMN). A helical transmembrane segment spans residues 48–68 (FLLLFIQSLVCVITLLVLKVL). The Cytoplasmic segment spans residues 69–84 (GSVNFRSFNKTDARNW). Residues 85–105 (FPISICLVLMIFTSSKSLQYL) traverse the membrane as a helical segment. Topologically, residues 106 to 108 (SVP) are lumenal. The helical transmembrane segment at 109–129 (VYTIFKNLTIIVIAYGEVLFF) threads the bilayer. At 130–131 (GS) the chain is on the cytoplasmic side. The helical transmembrane segment at 132–152 (SVGNMELGSFALMIVSSLIAA) threads the bilayer. Over 153–174 (HGDYLHSVERLKKMLGPNVSFS) the chain is Lumenal. The N-linked (GlcNAc...) asparagine glycan is linked to Asn-170. The chain crosses the membrane as a helical span at residues 175 to 195 (FIVNIGYFWIAANCFASALFV). The Cytoplasmic portion of the chain corresponds to 196-211 (LLMRKRIQVTNFKDFD). The chain crosses the membrane as a helical span at residues 212 to 232 (TMFYNNVLSLPLLLLGSYLFE). Residues 233 to 248 (DWSQENLLPHVDIDNL) are Lumenal-facing. The N-linked (GlcNAc...) asparagine glycan is linked to Asn-247. The helical transmembrane segment at 249–269 (STMIISGLASVAISYCSGWCV) threads the bilayer. The Cytoplasmic segment spans residues 270–274 (RVTSS). Residues 275–295 (TTYSMVGALNKLPIALTGFLF) form a helical membrane-spanning segment. Residues 296 to 300 (NDAAR) are Lumenal-facing. Residues 301-321 (NLSSAASILLGFASGIIYAVA) traverse the membrane as a helical segment. Residues 322 to 332 (KQKKLQNSEKI) are Cytoplasmic-facing.

This sequence belongs to the TPT transporter family. SLC35D subfamily. Homooligomer.

It is found in the golgi apparatus membrane. The protein localises to the cytoplasmic vesicle membrane. Its subcellular location is the endoplasmic reticulum membrane. Functionally, involved in the import of GDP-mannose from the cytoplasm into the Golgi lumen. This chain is GDP-mannose transporter 2 (VRG4-2), found in Vanderwaltozyma polyspora (strain ATCC 22028 / DSM 70294 / BCRC 21397 / CBS 2163 / NBRC 10782 / NRRL Y-8283 / UCD 57-17) (Kluyveromyces polysporus).